A 163-amino-acid chain; its full sequence is Probable chemoreceptor glutamine deamidase CheD (163 aa).

This sequence belongs to the CheD family.

It carries out the reaction L-glutaminyl-[protein] + H2O = L-glutamyl-[protein] + NH4(+). Probably deamidates glutamine residues to glutamate on methyl-accepting chemotaxis receptors (MCPs), playing an important role in chemotaxis. The chain is Probable chemoreceptor glutamine deamidase CheD from Borrelia garinii subsp. bavariensis (strain ATCC BAA-2496 / DSM 23469 / PBi) (Borreliella bavariensis).